Reading from the N-terminus, the 692-residue chain is Catalase-B (692 aa).

Catalysis depends on residues H69 and N142. Residue Y356 participates in heme binding.

The protein belongs to the catalase family. Heme is required as a cofactor.

The protein localises to the cytoplasm. It carries out the reaction 2 H2O2 = O2 + 2 H2O. In terms of biological role, occurs in almost all aerobically respiring organisms and serves to protect cells from the toxic effects of hydrogen peroxide. Its accumulation in prespore cells affords the spores protection from oxidation during prolonged dormancy. Required for normal developmental timing, possibly through a regulatory role in differentiation and morphogenesis. The protein is Catalase-B (catB) of Dictyostelium discoideum (Social amoeba).